The primary structure comprises 143 residues: MARHFGMALAPWDVMGGGRFQSKKAMEERRKNGECIRSFVGASEQTDAEIKISEALAKVAEEHGTESVTAIAIAYVRSKAKNVFPSVEGGKIEDLKENIKALSIDLTPDNIKYLENVVPFDIGFPNTFIVLNSLTQKYGTNNV.

This sequence belongs to the aldo/keto reductase family. Aldo/keto reductase 2 subfamily.

Functionally, putative aryl-alcohol dehydrogenase. The chain is Putative aryl-alcohol dehydrogenase AAD15 (AAD15) from Saccharomyces cerevisiae (strain ATCC 204508 / S288c) (Baker's yeast).